A 438-amino-acid polypeptide reads, in one-letter code: Phosphoribosylamine--glycine ligase (438 aa).

The 209-residue stretch at 108 to 316 folds into the ATP-grasp domain; sequence REFMERNNIP…LLEIAKGIVE (209 aa). 135 to 194 serves as a coordination point for ATP; that stretch reads IDEYGKPVVVKPLGLTGGKGVKVVGYQLKDNEEAKEYAEHIIRKDGKVLIEERTDGVEFT. Mg(2+) is bound by residues Gln-274, Glu-286, and Asn-288. Mn(2+) contacts are provided by Gln-274, Glu-286, and Asn-288.

It belongs to the GARS family. The cofactor is Mg(2+). Mn(2+) serves as cofactor.

The catalysed reaction is 5-phospho-beta-D-ribosylamine + glycine + ATP = N(1)-(5-phospho-beta-D-ribosyl)glycinamide + ADP + phosphate + H(+). The protein operates within purine metabolism; IMP biosynthesis via de novo pathway; N(1)-(5-phospho-D-ribosyl)glycinamide from 5-phospho-alpha-D-ribose 1-diphosphate: step 2/2. The polypeptide is Phosphoribosylamine--glycine ligase (Pyrococcus horikoshii (strain ATCC 700860 / DSM 12428 / JCM 9974 / NBRC 100139 / OT-3)).